The chain runs to 512 residues: UDP-N-acetylmuramate--L-alanine ligase (512 aa).

132–138 contributes to the ATP binding site; it reads GAHGKTT.

The protein belongs to the MurCDEF family.

The protein localises to the cytoplasm. It carries out the reaction UDP-N-acetyl-alpha-D-muramate + L-alanine + ATP = UDP-N-acetyl-alpha-D-muramoyl-L-alanine + ADP + phosphate + H(+). It participates in cell wall biogenesis; peptidoglycan biosynthesis. Cell wall formation. This is UDP-N-acetylmuramate--L-alanine ligase from Bifidobacterium longum (strain DJO10A).